The chain runs to 327 residues: Aspartate--ammonia ligase (327 aa).

It belongs to the class-II aminoacyl-tRNA synthetase family. AsnA subfamily.

The protein localises to the cytoplasm. It carries out the reaction L-aspartate + NH4(+) + ATP = L-asparagine + AMP + diphosphate + H(+). Its pathway is amino-acid biosynthesis; L-asparagine biosynthesis; L-asparagine from L-aspartate (ammonia route): step 1/1. In Mycoplasmoides gallisepticum (strain R(low / passage 15 / clone 2)) (Mycoplasma gallisepticum), this protein is Aspartate--ammonia ligase.